A 218-amino-acid polypeptide reads, in one-letter code: Hypoxanthine-guanine phosphoribosyltransferase (218 aa).

A2 carries the post-translational modification N-acetylalanine. Residue K69 coordinates GMP. N6-acetyllysine is present on K103. A Glycyl lysine isopeptide (Lys-Gly) (interchain with G-Cter in SUMO1); alternate cross-link involves residue K115. K115 is covalently cross-linked (Glycyl lysine isopeptide (Lys-Gly) (interchain with G-Cter in SUMO2); alternate). GMP-binding positions include 134–142 (EDIIDTGKT), K166, 186–188 (KFV), and D194. D138 functions as the Proton acceptor in the catalytic mechanism. The residue at position 142 (T142) is a Phosphothreonine. D194 contacts Mg(2+).

It belongs to the purine/pyrimidine phosphoribosyltransferase family. In terms of assembly, homotetramer. Requires Mg(2+) as cofactor.

Its subcellular location is the cytoplasm. The catalysed reaction is IMP + diphosphate = hypoxanthine + 5-phospho-alpha-D-ribose 1-diphosphate. The enzyme catalyses GMP + diphosphate = guanine + 5-phospho-alpha-D-ribose 1-diphosphate. The protein operates within purine metabolism; IMP biosynthesis via salvage pathway; IMP from hypoxanthine: step 1/1. In terms of biological role, converts guanine to guanosine monophosphate, and hypoxanthine to inosine monophosphate. Transfers the 5-phosphoribosyl group from 5-phosphoribosylpyrophosphate onto the purine. Plays a central role in the generation of purine nucleotides through the purine salvage pathway. This chain is Hypoxanthine-guanine phosphoribosyltransferase (HPRT1), found in Pan troglodytes (Chimpanzee).